The following is a 2220-amino-acid chain: Non-reducing polyketide synthase stbA (2220 aa).

Positions 10-255 are N-terminal acylcarrier protein transacylase domain (SAT); it reads IFSPQNSPPK…HDATNTDMAQ (246 aa). The region spanning 379-803 is the Ketosynthase family 3 (KS3) domain; sequence SDAIAVVGAG…GSNSALICSE (425 aa). Catalysis depends on for beta-ketoacyl synthase activity residues cysteine 551, histidine 687, and histidine 726. A malonyl-CoA:ACP transacylase (MAT) domain region spans residues 906–1207; the sequence is LAFSGQSRTN…ADATQHTFQA (302 aa). Residue serine 993 is the For acyl/malonyl transferase activity of the active site. The N-terminal hotdog fold stretch occupies residues 1287–1414; that stretch reads EPRAAQLVRY…GDFTMTAGPH (128 aa). The PKS/mFAS DH domain occupies 1287-1589; that stretch reads EPRAAQLVRY…FHKTSMTKLL (303 aa). A product template (PT) domain region spans residues 1292 to 1588; it reads QLVRYKGALG…HFHKTSMTKL (297 aa). Histidine 1323 functions as the Proton acceptor; for dehydratase activity in the catalytic mechanism. Residues 1436–1589 form a C-terminal hotdog fold region; that stretch reads DAEKLRKRTA…FHKTSMTKLL (154 aa). Aspartate 1500 (proton donor; for dehydratase activity) is an active-site residue. 2 Carrier domains span residues 1634–1711 and 1742–1821; these read AAGP…SGGA and PAGP…AADV. An O-(pantetheine 4'-phosphoryl)serine mark is found at serine 1671 and serine 1779. Positions 1879–2210 are thioesterase (TE) domain; that stretch reads TRFRMETVVY…YDFIFTELEN (332 aa). Catalysis depends on for thioesterase activity residues serine 1999 and aspartate 2148.

It carries out the reaction 3 malonyl-CoA + acetyl-CoA + 2 H(+) = orsellinate + 3 CO2 + 4 CoA. Its pathway is secondary metabolite biosynthesis; terpenoid biosynthesis. Non-reducing polyketide synthase; part of the cluster that mediates the biosynthesis of LL-Z1272-beta, also known as ilicicolin B, a prenylated aryl-aldehyde produced by several fungi and that serves as a key pathway intermediate for many fungal meroterpenoids. The first step in the pathway is performed by the non-reducing polyketide synthase stbA that produces orsellinic acid by condensing acetyl-CoA with 3 malonyl-CoA units. The prenyltransferase stbC then prenylates orsenilic acid into grifolic acid. Finally, grifolic acid is reduced to ilicicolin B by the NRPS-like protein stbB. The polypeptide is Non-reducing polyketide synthase stbA (Stachybotrys bisbyi (Hyalostachybotrys bisbyi)).